A 387-amino-acid chain; its full sequence is Double C2-like domain-containing protein gamma (387 aa).

2 C2 domains span residues 83–209 (ALGT…DICL) and 243–376 (ERGR…ELWH). The Ca(2+) site is built by D274, D280, D334, D336, and D342.

It depends on Ca(2+) as a cofactor.

May be involved in regulation of vesicular trafficking. In vitro, does not bind calcium and phospholipids. This is Double C2-like domain-containing protein gamma (Doc2g) from Mus musculus (Mouse).